The sequence spans 193 residues: uncharacterized protein (193 aa).

Arginine 8 is a substrate binding site. Residue histidine 9 is the Tele-phosphohistidine intermediate of the active site. Substrate is bound by residues asparagine 15, glutamine 21, and arginine 58. Glutamate 82 acts as the Proton donor/acceptor in catalysis. Histidine 139 contributes to the substrate binding site.

It belongs to the phosphoglycerate mutase family. GpmB subfamily.

Functionally, phosphatase with broad substrate specificity. Does not have phosphoglycerate mutase activity. This is an uncharacterized protein from Bacillus subtilis (strain 168).